The primary structure comprises 592 residues: Bifunctional enzyme BirA/CoaX (592 aa).

Residues 1 to 329 are biotin--protein ligase; it reads MTVLKPSHWR…ISLRPDNRSV (329 aa). The region spanning 83–259 is the BPL/LPL catalytic domain; the sequence is QTALKHECAS…ELGAVLEQYA (177 aa). The type III pantothenate kinase stretch occupies residues 336–592; sequence DSERFLLLEG…AAEGGESEHA (257 aa). 344–351 contributes to the ATP binding site; that stretch reads EGGNSRLK. Substrate is bound by residues Y426 and 433-436; that span reads GSDR. D435 acts as the Proton acceptor in catalysis. T458 contributes to the ATP binding site. Substrate is bound at residue T508.

This sequence in the N-terminal section; belongs to the biotin--protein ligase family. In the C-terminal section; belongs to the type III pantothenate kinase family. Requires NH4(+) as cofactor. K(+) serves as cofactor.

Its subcellular location is the cytoplasm. The catalysed reaction is biotin + L-lysyl-[protein] + ATP = N(6)-biotinyl-L-lysyl-[protein] + AMP + diphosphate + H(+). It catalyses the reaction (R)-pantothenate + ATP = (R)-4'-phosphopantothenate + ADP + H(+). The protein operates within cofactor biosynthesis; coenzyme A biosynthesis; CoA from (R)-pantothenate: step 1/5. In terms of biological role, activates biotin to form biotinyl-5'-adenylate and transfers the biotin moiety to biotin-accepting proteins. Its function is as follows. Catalyzes the phosphorylation of pantothenate (Pan), the first step in CoA biosynthesis. This chain is Bifunctional enzyme BirA/CoaX (birA/coaX), found in Neisseria gonorrhoeae (strain ATCC 700825 / FA 1090).